Reading from the N-terminus, the 155-residue chain is MPHSNISSTPRQQLTERVLQAKAANNLTWASLAEDTGLSVVYVTAALLGQHPLPQAVAEVVAERLGLDRDAVVELQTIPLRGHVEDVSSDPTIYRFHEMVQVYGTTLKALVHEQFGDGIISAINFKLDIRKVEDPEGGERAVITLDGKFLPYKPF.

Catalysis depends on residues Arg95, Glu98, and Ser121.

The protein belongs to the cyanase family.

It catalyses the reaction cyanate + hydrogencarbonate + 3 H(+) = NH4(+) + 2 CO2. Functionally, catalyzes the reaction of cyanate with bicarbonate to produce ammonia and carbon dioxide. The chain is Cyanate hydratase from Pseudomonas syringae pv. tomato (strain ATCC BAA-871 / DC3000).